Reading from the N-terminus, the 65-residue chain is Large ribosomal subunit protein bL35 (65 aa).

The protein belongs to the bacterial ribosomal protein bL35 family.

The polypeptide is Large ribosomal subunit protein bL35 (Ruminiclostridium cellulolyticum (strain ATCC 35319 / DSM 5812 / JCM 6584 / H10) (Clostridium cellulolyticum)).